Consider the following 149-residue polypeptide: MRAVVQRVDGASVSVAGATDDPSAPGVVGEIVGEGLCVLVGVTHDDTPQKAAQLARKLWSVRVLEGEKSCSDVNAPLLVISQFTLYGDARKGRRPTWNAAAPGEVAEPLVDEVVAQLRALGARVETGRFGADMRVSLTNHGPFTVIIEV.

The Gly-cisPro motif, important for rejection of L-amino acids signature appears at 141 to 142 (GP).

The protein belongs to the DTD family. Homodimer.

It is found in the cytoplasm. It carries out the reaction glycyl-tRNA(Ala) + H2O = tRNA(Ala) + glycine + H(+). It catalyses the reaction a D-aminoacyl-tRNA + H2O = a tRNA + a D-alpha-amino acid + H(+). In terms of biological role, an aminoacyl-tRNA editing enzyme that deacylates mischarged D-aminoacyl-tRNAs. Also deacylates mischarged glycyl-tRNA(Ala), protecting cells against glycine mischarging by AlaRS. Acts via tRNA-based rather than protein-based catalysis; rejects L-amino acids rather than detecting D-amino acids in the active site. By recycling D-aminoacyl-tRNA to D-amino acids and free tRNA molecules, this enzyme counteracts the toxicity associated with the formation of D-aminoacyl-tRNA entities in vivo and helps enforce protein L-homochirality. The sequence is that of D-aminoacyl-tRNA deacylase from Streptomyces griseus subsp. griseus (strain JCM 4626 / CBS 651.72 / NBRC 13350 / KCC S-0626 / ISP 5235).